Here is a 302-residue protein sequence, read N- to C-terminus: Homoserine O-acetyltransferase (302 aa).

C142 functions as the Acyl-thioester intermediate in the catalytic mechanism. Positions 163 and 192 each coordinate substrate. H235 functions as the Proton acceptor in the catalytic mechanism. E237 is an active-site residue. Residue R249 coordinates substrate.

The protein belongs to the MetA family.

The protein localises to the cytoplasm. The enzyme catalyses L-homoserine + acetyl-CoA = O-acetyl-L-homoserine + CoA. It functions in the pathway amino-acid biosynthesis; L-methionine biosynthesis via de novo pathway; O-acetyl-L-homoserine from L-homoserine: step 1/1. Functionally, transfers an acetyl group from acetyl-CoA to L-homoserine, forming acetyl-L-homoserine. The protein is Homoserine O-acetyltransferase of Clostridium novyi (strain NT).